The following is a 140-amino-acid chain: Putative pre-16S rRNA nuclease (140 aa).

This sequence belongs to the YqgF nuclease family.

The protein resides in the cytoplasm. Its function is as follows. Could be a nuclease involved in processing of the 5'-end of pre-16S rRNA. This chain is Putative pre-16S rRNA nuclease, found in Halalkalibacterium halodurans (strain ATCC BAA-125 / DSM 18197 / FERM 7344 / JCM 9153 / C-125) (Bacillus halodurans).